The sequence spans 374 residues: Cell wall integrity and stress response component 1 (374 aa).

The signal sequence occupies residues 1–29 (MVFLNSSPFKGRLLFFVYLLIISTRLVAA). Topologically, residues 30–292 (DMNTQYGCYL…SNHTSLNAGA (263 aa)) are extracellular. The 89-residue stretch at 31–119 (MNTQYGCYLV…DLYWSVYLTG (89 aa)) folds into the WSC domain. The segment at 132–236 (VSSTTSSSSS…SSSSSSRPSS (105 aa)) is disordered. N-linked (GlcNAc...) asparagine glycans are attached at residues Asn-278 and Asn-284. A helical transmembrane segment spans residues 293–313 (IVGIVIGCVAFAVVMALCIFL). At 314–374 (YFYFRRFKIR…RKILRVTNLN (61 aa)) the chain is on the cytoplasmic side. Ser-354 is modified (phosphoserine).

Post-translationally, O-mannosylated.

The protein resides in the membrane. In Schizosaccharomyces pombe (strain 972 / ATCC 24843) (Fission yeast), this protein is Cell wall integrity and stress response component 1 (wsc1).